A 376-amino-acid polypeptide reads, in one-letter code: MAQKQKCVAMLLAGGKGSRLSALTKNLAKPAVPFGGKYRIIDFTLSNCANSGIETVGILTQYQPLELHNYIGIGNAWDLDRVNGGVTVLPPYAESSGVKWYTGTASAIYQNLNYLSQYEPEYVLILSGDHIYKMDYSKMLDYHIEKEADVSISVIEVPWDEASRFGIMNTNEEMEVVEFEEKPQFPRSNLASMGIYIFNWAILKEYLEMDARNPESSNDFGKDVLPLLLDEGKKLMAYPFEGYWKDVGTVKSLWEANMDLLRDETSLNLNDRNWRIYSVNPNEPPQYIAEKAKVEESLINEGCVIEGDVKHSVLFQGVTVEEGSMVIDSVVMPGAKIGKNVVIERAIVGSEMVIEDGTIIRPEKNVDDVVLIAEGK.

Residues Tyr-101, Gly-166, 181-182 (EK), and Ser-192 each bind alpha-D-glucose 1-phosphate.

Belongs to the bacterial/plant glucose-1-phosphate adenylyltransferase family. As to quaternary structure, homotetramer.

It carries out the reaction alpha-D-glucose 1-phosphate + ATP + H(+) = ADP-alpha-D-glucose + diphosphate. Its pathway is glycan biosynthesis; glycogen biosynthesis. Its function is as follows. Involved in the biosynthesis of ADP-glucose, a building block required for the elongation reactions to produce glycogen. Catalyzes the reaction between ATP and alpha-D-glucose 1-phosphate (G1P) to produce pyrophosphate and ADP-Glc. This chain is Glucose-1-phosphate adenylyltransferase, found in Bacillus mycoides (strain KBAB4) (Bacillus weihenstephanensis).